A 653-amino-acid polypeptide reads, in one-letter code: Fidgetin-like protein 2 (653 aa).

Disordered stretches follow at residues 1–36, 86–129, and 216–240; these read MHWT…ELPP, ASFL…SGAL, and YGAL…APTP. Over residues 10–27 the composition is skewed to polar residues; it reads PLNQWPEQHLDVSSTTPS. Positions 97–107 are enriched in pro residues; it reads EPWPGPEPPYP. The segment covering 119-129 has biased composition (gly residues); the sequence is KSGGGGGSGAL. A compositionally biased stretch (pro residues) spans 219-240; sequence LPPPPGPPPAPYLTPGLPAPTP. Residues alanine 395 and 435 to 440 each bind ATP; that span reads GAGKAL.

It belongs to the AAA ATPase family. Mg(2+) serves as cofactor.

The protein resides in the cytoplasm. The protein localises to the cell cortex. It carries out the reaction ATP + H2O = ADP + phosphate + H(+). Microtubule-severing enzyme that negatively regulates cell migration and wound healing. In migrating cells, targets dynamic microtubules (MTs) at the leading edge and severs them, thereby suppressing motility. Microtubule severing releases ARHGEF2 which activates RHOA, which in turn regulates focal ahesion turnover via focal adhesion kinase, as opposed to F-actin polymerization, to suppress cell motility. Negative regulator of axon regeneration that suppresses axonal growth by selectively severing dynamic MTs in the distal axon shaft and growth cone. Contributes to proper cell branching during endothelial and neuronal development. The sequence is that of Fidgetin-like protein 2 from Homo sapiens (Human).